The primary structure comprises 344 residues: L-rhamnose-proton symporter (344 aa).

Transmembrane regions (helical) follow at residues 4–24 (PILL…CFYA), 38–58 (WSLG…WWLL), 68–88 (FDMA…IGNI), 101–121 (MGIG…TPVL), 137–157 (TLLG…AGLL), 175–195 (LILA…MDAA), 214–234 (LPSY…FCFI), 255–275 (LIAN…QFFF), 290–310 (ISWM…GLLF), and 324–344 (LVLG…GMAV).

The protein belongs to the L-rhamnose transporter (TC 2.A.7.6) family.

The protein resides in the cell inner membrane. The catalysed reaction is L-rhamnopyranose(in) + H(+)(in) = L-rhamnopyranose(out) + H(+)(out). Uptake of L-rhamnose across the cytoplasmic membrane with the concomitant transport of protons into the cell (symport system). The sequence is that of L-rhamnose-proton symporter from Pectobacterium atrosepticum (strain SCRI 1043 / ATCC BAA-672) (Erwinia carotovora subsp. atroseptica).